Consider the following 1091-residue polypeptide: Rho GTPase-activating protein 7 (1091 aa).

Residues Leu11–Glu78 enclose the SAM domain. Phosphoserine is present on residues Ser86, Ser89, and Ser129. 4 disordered regions span residues Ser120–Arg181, Arg296–Leu329, Arg402–Met439, and Ser491–Gly552. Over residues Pro130 to Ser143 the composition is skewed to polar residues. Composition is skewed to low complexity over residues Ser155 to Ser166 and Val298 to Thr324. The focal adhesion-targeting (FAT) stretch occupies residues Gln274–Gly447. Ser321 is subject to Phosphoserine. The segment covering Leu414 to Glu425 has biased composition (basic and acidic residues). The segment covering Ala499 to Lys511 has biased composition (polar residues). Residues Ile513–Ser525 are compositionally biased toward basic and acidic residues. Residues Asp526–Asn535 show a composition bias toward polar residues. The polybasic cluster (PBR) stretch occupies residues Lys614–Arg636. The Rho-GAP domain occupies Val641 to Phe847. One can recognise an START domain in the interval Ser877–Glu1084.

As to quaternary structure, interacts with EF1A1, facilitates EF1A1 distribution to the membrane periphery and ruffles upon growth factor stimulation and suppresses cell migration. Interacts with tensin TNS1 (via N-terminus); the interaction is decreased by phosphorylation of TNS1. Interacts with TNS3 and PTEN; in resting cells, interacts with TNS3 (via C2 tensin-type domain) but, following growth factor stimulation, TNS3 and PTEN are phosphorylated which leads to weakened interaction with TNS3 and enhanced interaction with PTEN. Interacts (via C-terminus) with tensin TNS4 (via SH2 domain); the interaction is independent of tyrosine phosphorylation of DLC1.

The protein resides in the cytoplasm. It is found in the cell junction. It localises to the focal adhesion. Its subcellular location is the membrane. Functions as a GTPase-activating protein for the small GTPases RHOA, RHOB, RHOC and CDC42, terminating their downstream signaling. This induces morphological changes and detachment through cytoskeletal reorganization, playing a critical role in biological processes such as cell migration and proliferation. Also functions in vivo as an activator of the phospholipase PLCD1. Active DLC1 increases cell migration velocity but reduces directionality. Required for growth factor-induced epithelial cell migration; in resting cells, interacts with TNS3 while PTEN interacts with the p85 regulatory subunit of the PI3K kinase complex but growth factor stimulation induces phosphorylation of TNS3 and PTEN, causing them to change their binding preference so that PTEN interacts with DLC1 and TNS3 interacts with p85. The PTEN-DLC1 complex translocates to the posterior of migrating cells to activate RHOA while the TNS3-p85 complex translocates to the leading edge of migrating cells to promote RAC1 activation. This chain is Rho GTPase-activating protein 7 (Dlc1), found in Rattus norvegicus (Rat).